Reading from the N-terminus, the 99-residue chain is Small ribosomal subunit protein uS14m (99 aa).

The protein belongs to the universal ribosomal protein uS14 family.

Its subcellular location is the mitochondrion. The chain is Small ribosomal subunit protein uS14m (RPS14) from Marchantia polymorpha (Common liverwort).